Consider the following 313-residue polypeptide: Carbamate kinase (313 aa).

The protein belongs to the carbamate kinase family.

It is found in the cytoplasm. It catalyses the reaction hydrogencarbonate + NH4(+) + ATP = carbamoyl phosphate + ADP + H2O + H(+). It participates in metabolic intermediate metabolism; carbamoyl phosphate degradation; CO(2) and NH(3) from carbamoyl phosphate: step 1/1. This Oenococcus oeni (Leuconostoc oenos) protein is Carbamate kinase (arcC).